We begin with the raw amino-acid sequence, 512 residues long: Hyaluronidase PH-20 (512 aa).

A signal peptide spans 1 to 35; it reads MGELRFKHLFWGSFVESGGTFQTVLIFLLIPCSLT. N-linked (GlcNAc...) asparagine glycosylation occurs at asparagine 46. 2 disulfide bridges follow: cysteine 60-cysteine 351 and cysteine 223-cysteine 237. Residue glutamate 147 is the Proton donor of the active site. Asparagine 165 carries N-linked (GlcNAc...) asparagine glycosylation. Residues asparagine 293 and asparagine 368 are each glycosylated (N-linked (GlcNAc...) asparagine). 3 cysteine pairs are disulfide-bonded: cysteine 376–cysteine 387, cysteine 381–cysteine 435, and cysteine 437–cysteine 464.

Belongs to the glycosyl hydrolase 56 family.

Its subcellular location is the cell membrane. It carries out the reaction Random hydrolysis of (1-&gt;4)-linkages between N-acetyl-beta-D-glucosamine and D-glucuronate residues in hyaluronate.. Functionally, involved in sperm-egg adhesion. Upon fertilization sperm must first penetrate a layer of cumulus cells that surrounds the egg before reaching the zona pellucida. The cumulus cells are embedded in a matrix containing hyaluronic acid which is formed prior to ovulation. This protein aids in penetrating the layer of cumulus cells by digesting hyaluronic acid. This Mus musculus (Mouse) protein is Hyaluronidase PH-20 (Spam1).